The sequence spans 570 residues: Proline--tRNA ligase (570 aa).

It belongs to the class-II aminoacyl-tRNA synthetase family. ProS type 1 subfamily. In terms of assembly, homodimer.

The protein resides in the cytoplasm. It carries out the reaction tRNA(Pro) + L-proline + ATP = L-prolyl-tRNA(Pro) + AMP + diphosphate. In terms of biological role, catalyzes the attachment of proline to tRNA(Pro) in a two-step reaction: proline is first activated by ATP to form Pro-AMP and then transferred to the acceptor end of tRNA(Pro). As ProRS can inadvertently accommodate and process non-cognate amino acids such as alanine and cysteine, to avoid such errors it has two additional distinct editing activities against alanine. One activity is designated as 'pretransfer' editing and involves the tRNA(Pro)-independent hydrolysis of activated Ala-AMP. The other activity is designated 'posttransfer' editing and involves deacylation of mischarged Ala-tRNA(Pro). The misacylated Cys-tRNA(Pro) is not edited by ProRS. This is Proline--tRNA ligase from Wolinella succinogenes (strain ATCC 29543 / DSM 1740 / CCUG 13145 / JCM 31913 / LMG 7466 / NCTC 11488 / FDC 602W) (Vibrio succinogenes).